Here is a 297-residue protein sequence, read N- to C-terminus: Protein phosphatase PTC7 homolog (297 aa).

The N-terminal 27 residues, 1–27 (MFSVLSCGRLVARAVFGGLSQTDSRDY), are a transit peptide targeting the mitochondrion. The PPM-type phosphatase domain maps to 28–292 (SLVTASCGFG…DDITVLLSIV (265 aa)). Mn(2+)-binding residues include D71, G72, and D216.

The protein belongs to the PP2C family. It depends on Mg(2+) as a cofactor. Requires Mn(2+) as cofactor.

The protein localises to the mitochondrion matrix. It catalyses the reaction O-phospho-L-seryl-[protein] + H2O = L-seryl-[protein] + phosphate. The enzyme catalyses O-phospho-L-threonyl-[protein] + H2O = L-threonyl-[protein] + phosphate. In terms of biological role, protein phosphatase which positively regulates biosynthesis of the ubiquinone, coenzyme Q. Dephosphorylates the ubiquinone biosynthesis protein coq7 which is likely to lead to its activation. This Xenopus laevis (African clawed frog) protein is Protein phosphatase PTC7 homolog (pptc7).